The sequence spans 1597 residues: Glucosyltransferase-I (1597 aa).

Positions 1–38 are cleaved as a signal peptide; sequence MEKNERFKMHKVKKRWVTISVASATMLASALGASVASA. The disordered stretch occupies residues 52 to 120; the sequence is LTADQTTTNQ…QTTTNANEAK (69 aa). The segment covering 53–114 has biased composition (low complexity); the sequence is TADQTTTNQD…STDTAAQTTT (62 aa). 2 Cell wall-binding repeats span residues 157 to 176 and 178 to 197; these read MSNVKQVDGKYYYYDQDGNV and KNFAVSVGEKIYYFDETGAY. The catalytic; approximate stretch occupies residues 200 to 1050; it reads TSKVEADKSG…DQASNKYLNV (851 aa). Cell wall-binding repeat units follow at residues 1089-1108, 1109-1128, 1130-1150, 1152-1172, 1173-1191, 1193-1214, 1216-1236, 1237-1256, 1258-1279, 1281-1301, 1302-1321, 1323-1343, 1344-1365, 1366-1380, 1415-1434, 1436-1457, 1459-1478, 1485-1505, 1508-1527, 1528-1547, 1549-1570, and 1572-1591; these read TDSFITEAGNLYYFGQDGYM, VTGAQNIKGSNYYFLANGAA, RNTVYTDAQGQNHYYGNDGKR, ENGYQQFGNDSWRYFKNGVMA, LGLTTVDGHVQYFDKDGVQ, KDKIIVTRDGKVRYFDQHNGNA, TNTFVADKTGHWYYLGKDGVA, VTGAQTVGKQHLYFEANGQQ, KGDFVTAKDGKLYFYDVDSGDM, TNTFIEDKAGNWFYLGKDGAA, VTGAQTIKGQKLYFKANGQQ, KGDIVKDADGKIRYYDAQTGE, QVFNKSVSVNGKTYYFGSDGTA, QTQANPKGQTFKDGS, LTGAQTIGNQRVYFKDNGHQ, KGQLVTGNDGKLRYYDANSGDQ, FNKSVTVNGKTYYFGSDGTA, KGQTFKDGSGVLRFYNLEGQY, GSGWYKNAQGQWLYVKDGKV, LTGLQTVGNQKVYFDKNGIQ, KGKAVRTSDGKVRYFDENSGSM, and TNQWKFVYGQYYYFGSDGAA. The segment at 1099–1597 is glucan-binding; approximate; that stretch reads LYYFGQDGYM…DGAAVYRGWN (499 aa).

It belongs to the glycosyl hydrolase 70 family.

It localises to the secreted. It carries out the reaction [(1-&gt;6)-alpha-D-glucosyl](n) + sucrose = [(1-&gt;6)-alpha-D-glucosyl](n+1) + D-fructose. Its function is as follows. Production of extracellular glucans, that are thought to play a key role in the development of the dental plaque because of their ability to adhere to smooth surfaces and mediate the aggregation of bacterial cells and food debris. The protein is Glucosyltransferase-I (gtfI) of Streptococcus downei (Streptococcus sobrinus).